Consider the following 583-residue polypeptide: Pentatricopeptide repeat-containing protein At2g33760 (583 aa).

9 PPR repeats span residues 71–105, 106–140, 141–171, 172–206, 207–241, 242–276, 277–303, 309–339, and 345–379; these read DDFLFNSVIKSTSKLRLPLHCVAYYRRMLSSNVSP, SNYTFTSVIKSCADLSALRIGKGVHCHAVVSGFGL, DTYVQAALVTFYSKCGDMEGARQVFDRMPEK, SIVAWNSLVSGFEQNGLADEAIQVFYQMRESGFEP, DSATFVSLLSACAQTGAVSLGSWVHQYIISEGLDL, NVKLGTALINLYSRCGDVGKAREVFDKMKETNVAA, WTAMISAYGTHGYGQQAVELFNKMEDD, NNVTFVAVLSACAHAGLVEEGRSVYKRMTKS, and GVEHHVCMVDMLGRAGFLDEAYKFIHQLDATGKAT. Residues 383 to 458 form a type E motif region; sequence LWTAMLGACK…QVGYSVIEVE (76 aa). The tract at residues 459 to 489 is type E(+) motif; the sequence is NKTYMFSMGDESHQETGEIYRYLETLISRCK. The segment at 490-583 is type DYW motif; sequence EIGYAPVSEE…NGSCSCLDYW (94 aa).

Belongs to the PPR family. PCMP-H subfamily.

This Arabidopsis thaliana (Mouse-ear cress) protein is Pentatricopeptide repeat-containing protein At2g33760 (PCMP-H6).